Reading from the N-terminus, the 388-residue chain is Gastricsin (388 aa).

Residues 1–16 (MKWMVVAFICLQLLEA) form the signal peptide. The propeptide at 17–59 (TVVKVPLKKFKSIRETMKEKGLLWEFLKTHKHDPARKYRVSDL) is activation peptide. The Peptidase A1 domain maps to 73–385 (YFGEISIGTP…DLGNNRVGFA (313 aa)). Residue D91 is part of the active site. Cystine bridges form between C104-C109 and C267-C271. D276 is an active-site residue. C310 and C343 are joined by a disulfide.

It belongs to the peptidase A1 family.

It localises to the secreted. It catalyses the reaction More restricted specificity than pepsin A, but shows preferential cleavage at Tyr-|-Xaa bonds. High activity on hemoglobin.. Its activity is regulated as follows. Inhibited by pepstatin. Hydrolyzes a variety of proteins. The chain is Gastricsin (PGC) from Callithrix jacchus (White-tufted-ear marmoset).